A 668-amino-acid polypeptide reads, in one-letter code: Probable tRNA (uracil-O(2)-)-methyltransferase (668 aa).

A disordered region spans residues glutamine 441–proline 460. The segment at leucine 620 to glutamate 649 adopts a C3H1-type zinc-finger fold.

It belongs to the TRM44 family.

The protein localises to the cytoplasm. The catalysed reaction is uridine(44) in tRNA(Ser) + S-adenosyl-L-methionine = 2'-O-methyluridine(44) in tRNA(Ser) + S-adenosyl-L-homocysteine + H(+). Its function is as follows. Probable adenosyl-L-methionine (AdoMet)-dependent tRNA (uracil-O(2)-)-methyltransferase. The polypeptide is Probable tRNA (uracil-O(2)-)-methyltransferase (trmt44) (Xenopus laevis (African clawed frog)).